The primary structure comprises 355 residues: Tyrosine recombinase XerC (355 aa).

The 86-residue stretch at 4-89 folds into the Core-binding (CB) domain; sequence TQFDGDIDSF…AVRGFFAWAY (86 aa). A disordered region spans residues 138–180; the sequence is DDGGAAAASGSGKAAGKTADKSADTVNRSEAPARADKRDNARV. Residues 141–154 are compositionally biased toward low complexity; that stretch reads GAAAASGSGKAAGK. Positions 158 to 349 constitute a Tyr recombinase domain; that stretch reads KSADTVNRSE…SIEQLKNRYG (192 aa). The span at 168–178 shows a compositional bias: basic and acidic residues; that stretch reads APARADKRDNA. Residues arginine 200, lysine 224, histidine 301, arginine 304, and histidine 327 contribute to the active site. The active-site O-(3'-phospho-DNA)-tyrosine intermediate is tyrosine 336.

Belongs to the 'phage' integrase family. XerC subfamily. In terms of assembly, forms a cyclic heterotetrameric complex composed of two molecules of XerC and two molecules of XerD.

It is found in the cytoplasm. Its function is as follows. Site-specific tyrosine recombinase, which acts by catalyzing the cutting and rejoining of the recombining DNA molecules. The XerC-XerD complex is essential to convert dimers of the bacterial chromosome into monomers to permit their segregation at cell division. It also contributes to the segregational stability of plasmids. The protein is Tyrosine recombinase XerC of Bifidobacterium longum subsp. infantis (strain ATCC 15697 / DSM 20088 / JCM 1222 / NCTC 11817 / S12).